The sequence spans 113 residues: Retrotransposon Gag-like protein 8A (113 aa).

This sequence belongs to the FAM127 family.

The protein is Retrotransposon Gag-like protein 8A of Homo sapiens (Human).